The following is a 408-amino-acid chain: Bifunctional enzyme IspD/IspF (408 aa).

The segment at 1-247 is 2-C-methyl-D-erythritol 4-phosphate cytidylyltransferase; the sequence is MNAPFEKDRR…GPAMTELPDI (247 aa). The tract at residues 248–408 is 2-C-methyl-D-erythritol 2,4-cyclodiphosphate synthase; it reads RVGNGYDVHG…TVAYPGSLGN (161 aa). A divalent metal cation is bound by residues Asp254 and His256. Residues 254–256 and 280–281 contribute to the 4-CDP-2-C-methyl-D-erythritol 2-phosphate site; these read DVH and HS. His288 provides a ligand contact to a divalent metal cation. 4-CDP-2-C-methyl-D-erythritol 2-phosphate is bound by residues 302–304, 378–381, Phe385, and Arg388; these read DIG and TTNE.

This sequence in the N-terminal section; belongs to the IspD/TarI cytidylyltransferase family. IspD subfamily. In the C-terminal section; belongs to the IspF family. A divalent metal cation is required as a cofactor.

The catalysed reaction is 2-C-methyl-D-erythritol 4-phosphate + CTP + H(+) = 4-CDP-2-C-methyl-D-erythritol + diphosphate. It catalyses the reaction 4-CDP-2-C-methyl-D-erythritol 2-phosphate = 2-C-methyl-D-erythritol 2,4-cyclic diphosphate + CMP. It functions in the pathway isoprenoid biosynthesis; isopentenyl diphosphate biosynthesis via DXP pathway; isopentenyl diphosphate from 1-deoxy-D-xylulose 5-phosphate: step 2/6. It participates in isoprenoid biosynthesis; isopentenyl diphosphate biosynthesis via DXP pathway; isopentenyl diphosphate from 1-deoxy-D-xylulose 5-phosphate: step 4/6. Functionally, bifunctional enzyme that catalyzes the formation of 4-diphosphocytidyl-2-C-methyl-D-erythritol from CTP and 2-C-methyl-D-erythritol 4-phosphate (MEP) (IspD), and catalyzes the conversion of 4-diphosphocytidyl-2-C-methyl-D-erythritol 2-phosphate (CDP-ME2P) to 2-C-methyl-D-erythritol 2,4-cyclodiphosphate (ME-CPP) with a corresponding release of cytidine 5-monophosphate (CMP) (IspF). The polypeptide is Bifunctional enzyme IspD/IspF (Chelativorans sp. (strain BNC1)).